Reading from the N-terminus, the 332-residue chain is Ketol-acid reductoisomerase (NADP(+)) (332 aa).

Residues 1-182 enclose the KARI N-terminal Rossmann domain; that stretch reads MAQVWKDAEI…GSARAGLIKT (182 aa). Residues 25-28, lysine 48, serine 53, and 83-86 each bind NADP(+); these read YGIQ and DMIQ. Histidine 108 is a catalytic residue. NADP(+) is bound at residue glycine 134. The KARI C-terminal knotted domain occupies 183-329; it reads TFKEEVETDW…RKMRKMMWPD (147 aa). Mg(2+) is bound by residues aspartate 191, glutamate 195, glutamate 227, and glutamate 231. Serine 252 is a binding site for substrate.

The protein belongs to the ketol-acid reductoisomerase family. The cofactor is Mg(2+).

It catalyses the reaction (2R)-2,3-dihydroxy-3-methylbutanoate + NADP(+) = (2S)-2-acetolactate + NADPH + H(+). The catalysed reaction is (2R,3R)-2,3-dihydroxy-3-methylpentanoate + NADP(+) = (S)-2-ethyl-2-hydroxy-3-oxobutanoate + NADPH + H(+). Its pathway is amino-acid biosynthesis; L-isoleucine biosynthesis; L-isoleucine from 2-oxobutanoate: step 2/4. The protein operates within amino-acid biosynthesis; L-valine biosynthesis; L-valine from pyruvate: step 2/4. Involved in the biosynthesis of branched-chain amino acids (BCAA). Catalyzes an alkyl-migration followed by a ketol-acid reduction of (S)-2-acetolactate (S2AL) to yield (R)-2,3-dihydroxy-isovalerate. In the isomerase reaction, S2AL is rearranged via a Mg-dependent methyl migration to produce 3-hydroxy-3-methyl-2-ketobutyrate (HMKB). In the reductase reaction, this 2-ketoacid undergoes a metal-dependent reduction by NADPH to yield (R)-2,3-dihydroxy-isovalerate. This Cenarchaeum symbiosum (strain A) protein is Ketol-acid reductoisomerase (NADP(+)).